The chain runs to 197 residues: Recombination protein RecR (197 aa).

The C4-type zinc-finger motif lies at 56–71 (CHVCGNYCESDTCNIC). The 96-residue stretch at 79-174 (RIICVVEESK…KITKLASGIP (96 aa)) folds into the Toprim domain.

The protein belongs to the RecR family.

Functionally, may play a role in DNA repair. It seems to be involved in an RecBC-independent recombinational process of DNA repair. It may act with RecF and RecO. This is Recombination protein RecR from Fusobacterium nucleatum subsp. nucleatum (strain ATCC 25586 / DSM 15643 / BCRC 10681 / CIP 101130 / JCM 8532 / KCTC 2640 / LMG 13131 / VPI 4355).